Here is a 67-residue protein sequence, read N- to C-terminus: Large ribosomal subunit protein uL29 (67 aa).

This sequence belongs to the universal ribosomal protein uL29 family.

The polypeptide is Large ribosomal subunit protein uL29 (Rhizorhabdus wittichii (strain DSM 6014 / CCUG 31198 / JCM 15750 / NBRC 105917 / EY 4224 / RW1) (Sphingomonas wittichii)).